The sequence spans 214 residues: Shikimate kinase (214 aa).

Gly-35–Thr-40 contacts ATP. Residue Ser-39 coordinates Mg(2+). Substrate contacts are provided by Asp-57, Arg-81, and Gly-103. An ATP-binding site is contributed by Arg-141. Arg-160 contacts substrate.

Belongs to the shikimate kinase family. As to quaternary structure, monomer. It depends on Mg(2+) as a cofactor.

The protein resides in the cytoplasm. The enzyme catalyses shikimate + ATP = 3-phosphoshikimate + ADP + H(+). It participates in metabolic intermediate biosynthesis; chorismate biosynthesis; chorismate from D-erythrose 4-phosphate and phosphoenolpyruvate: step 5/7. Functionally, catalyzes the specific phosphorylation of the 3-hydroxyl group of shikimic acid using ATP as a cosubstrate. In Nitrobacter winogradskyi (strain ATCC 25391 / DSM 10237 / CIP 104748 / NCIMB 11846 / Nb-255), this protein is Shikimate kinase.